The chain runs to 854 residues: Protein mono-ADP-ribosyltransferase PARP9 (854 aa).

2 consecutive Macro domains span residues 107–296 (LQVF…EFIL) and 306–487 (TPSF…AKRS). Residues 628–850 (IQQQKTQDEM…QHPWRGFASG (223 aa)) enclose the PARP catalytic domain.

It belongs to the ARTD/PARP family. Forms a stable complex with E3 ligase DTX3L; the interaction is required for PARP9 mediated ADP-ribosylation of ubiquitin. Interacts (via PARP catalytic domain) with DTX3L (via N-terminus). Forms a complex with STAT1 and DTX3L independently of IFNB1 or IFNG-mediated STAT1 'Tyr-701' phosphorylation. Forms a complex with STAT1, DTX3L and histone H2B H2BC9/H2BJ; the interaction is likely to induce H2BC9/H2BJ ubiquitination. Interacts (via N-terminus) with STAT1. Interacts with PARP14 in IFNG-stimulated macrophages; the interaction prevents PARP14-mediated STAT1 and STAT6 ADP-riboslylation. Interacts with PARP1 (when poly-ADP-ribosylated). ADP-ribosylated by PARP14. As to expression, expressed in lymphocyte-rich tissues, spleen, lymph nodes, peripheral blood lymphocytes and colonic mucosa. Expressed in macrophages. Also expressed in nonhematopoietic tissues such as heart and skeletal muscle. Isoform 2 is the predominant form. Most abundantly expressed in lymphomas with a brisk host inflammatory response. In diffuse large B-cell lymphomas tumors, expressed specifically by malignant B-cells.

It is found in the cytoplasm. It localises to the cytosol. The protein localises to the nucleus. It carries out the reaction [protein]-C-terminal glycine + NAD(+) = [protein]-C-terminal O-(ADP-D-ribosyl)-glycine + nicotinamide. Its activity is regulated as follows. Binding to poly(ADP-ribose) does not affect its activity. Its function is as follows. ADP-ribosyltransferase which, in association with E3 ligase DTX3L, plays a role in DNA damage repair and in immune responses including interferon-mediated antiviral defenses. Within the complex, enhances DTX3L E3 ligase activity which is further enhanced by PARP9 binding to poly(ADP-ribose). In association with DTX3L and in presence of E1 and E2 enzymes, mediates NAD(+)-dependent mono-ADP-ribosylation of ubiquitin which prevents ubiquitin conjugation to substrates such as histones. During DNA repair, PARP1 recruits PARP9/BAL1-DTX3L complex to DNA damage sites via PARP9 binding to ribosylated PARP1. Subsequent PARP1-dependent PARP9/BAL1-DTX3L-mediated ubiquitination promotes the rapid and specific recruitment of 53BP1/TP53BP1, UIMC1/RAP80, and BRCA1 to DNA damage sites. In response to DNA damage, PARP9-DTX3L complex is required for efficient non-homologous end joining (NHEJ); the complex function is negatively modulated by PARP9 activity. Dispensable for B-cell receptor (BCR) assembly through V(D)J recombination and class switch recombination (CSR). In macrophages, positively regulates pro-inflammatory cytokines production in response to IFNG stimulation by suppressing PARP14-mediated STAT1 ADP-ribosylation and thus promoting STAT1 phosphorylation. Also suppresses PARP14-mediated STAT6 ADP-ribosylation. This Homo sapiens (Human) protein is Protein mono-ADP-ribosyltransferase PARP9 (PARP9).